The following is a 105-amino-acid chain: Heat shock protein HspQ (105 aa).

The segment at 80–105 is disordered; the sequence is AHPEQPSLDELAASIRHQLQAPHLRN.

Belongs to the HspQ family.

It localises to the cytoplasm. Involved in the degradation of certain denaturated proteins, including DnaA, during heat shock stress. This Yersinia pseudotuberculosis serotype O:1b (strain IP 31758) protein is Heat shock protein HspQ.